Reading from the N-terminus, the 258-residue chain is MIPPADSLLKYDTPVLVSRNTEKRSPKARPLKVTVQQPGPSGAGPQPPKAKLPSTSCVPDPTKQAEEILNAILPPREWVEDTQLWIQQVSSTPSTRMDVVHLQEQLDLKLQQRQARETGICPVRRELYSQCFDELIREVTINCAERGLLLLRVRDEIRMTIAAYQTLYESSVAFGMRKALQAEQGKSDMERKITELETEKRDLERQVNEQKAKCEATEKRESERRQVEEKKHNEEIQFLKRTNQQLKAQLEGIIAPKK.

Disordered regions lie at residues 1-60 (MIPP…CVPD) and 202-231 (DLERQVNEQKAKCEATEKRESERRQVEEKK). Residues 176–255 (MRKALQAEQG…LKAQLEGIIA (80 aa)) adopt a coiled-coil conformation.

It belongs to the inner dynein arm light chain family. As to quaternary structure, interacts with CFAP45. Interacts with DYNC1H1.

Its subcellular location is the cell projection. It is found in the cilium. The protein resides in the flagellum. It localises to the dynein axonemal particle. The protein localises to the cytoplasm. Involved in sperm flagellum assembly. The sequence is that of Axonemal dynein light intermediate polypeptide 1 from Rattus norvegicus (Rat).